An 86-amino-acid chain; its full sequence is MTASEGRVRSVTGRVVSNKMDRTIVVAIERQVSHPLYGKYIRRTTKVLAHDENNECSIGDLVTLHASRPISKKKAWTLGAIVERAV.

Belongs to the universal ribosomal protein uS17 family. Part of the 30S ribosomal subunit.

Its function is as follows. One of the primary rRNA binding proteins, it binds specifically to the 5'-end of 16S ribosomal RNA. The sequence is that of Small ribosomal subunit protein uS17 from Methylococcus capsulatus (strain ATCC 33009 / NCIMB 11132 / Bath).